A 99-amino-acid chain; its full sequence is Seminal vesicle secretory protein 6 (99 aa).

The first 21 residues, 1–21 (MSPTSFFLLTMLLVLVTETAA), serve as a signal peptide directing secretion.

This sequence belongs to the SVP2/SVP5/SVP6 family. Testis.

Its subcellular location is the secreted. It is found in the extracellular space. This is Seminal vesicle secretory protein 6 (Svs6) from Mus musculus (Mouse).